Here is a 353-residue protein sequence, read N- to C-terminus: Nicotinate-nucleotide--dimethylbenzimidazole phosphoribosyltransferase (353 aa).

The Proton acceptor role is filled by Glu319.

This sequence belongs to the CobT family.

It catalyses the reaction 5,6-dimethylbenzimidazole + nicotinate beta-D-ribonucleotide = alpha-ribazole 5'-phosphate + nicotinate + H(+). The protein operates within nucleoside biosynthesis; alpha-ribazole biosynthesis; alpha-ribazole from 5,6-dimethylbenzimidazole: step 1/2. Catalyzes the synthesis of alpha-ribazole-5'-phosphate from nicotinate mononucleotide (NAMN) and 5,6-dimethylbenzimidazole (DMB). The protein is Nicotinate-nucleotide--dimethylbenzimidazole phosphoribosyltransferase of Prosthecochloris aestuarii (strain DSM 271 / SK 413).